The chain runs to 363 residues: Probable cinnamyl alcohol dehydrogenase 6 (363 aa).

Residue Cys51 participates in Zn(2+) binding. Ser53 is a binding site for NADP(+). Residues His73, Glu74, Cys104, Cys107, Cys110, Cys118, and Cys167 each contribute to the Zn(2+) site. NADP(+) is bound by residues Ser171, 192–197, 215–220, Thr255, Gly279, and 302–304; these read GLGGLG, SSTTGK, and SGI.

The protein belongs to the zinc-containing alcohol dehydrogenase family. In terms of assembly, homodimer. Zn(2+) serves as cofactor. As to expression, expressed in the primary and lateral roots, and root caps. Expressed in the hypocotyl, cotyledon veins and hydathodes. In stems, expressed in the vascular cambium, interfascicular cambium and developing xylem. Expressed in the style, anthers, stamen filaments, vascular tissues of sepals, stigmatic regions in flowers, and abscission and style regions of siliques.

The catalysed reaction is (E)-cinnamyl alcohol + NADP(+) = (E)-cinnamaldehyde + NADPH + H(+). It catalyses the reaction (E)-coniferol + NADP(+) = (E)-coniferaldehyde + NADPH + H(+). It carries out the reaction (E)-sinapyl alcohol + NADP(+) = (E)-sinapaldehyde + NADPH + H(+). The enzyme catalyses (E)-4-coumaroyl alcohol + NADP(+) = (E)-4-coumaraldehyde + NADPH + H(+). The catalysed reaction is (E)-caffeyl alcohol + NADP(+) = (E)-caffeyl aldehyde + NADPH + H(+). It functions in the pathway aromatic compound metabolism; phenylpropanoid biosynthesis. Involved in lignin biosynthesis. Catalyzes the final step specific for the production of lignin monomers. Catalyzes the NADPH-dependent reduction of coniferaldehyde, 5-hydroxyconiferaldehyde, sinapaldehyde, 4-coumaraldehyde and caffeyl aldehyde to their respective alcohols. The sequence is that of Probable cinnamyl alcohol dehydrogenase 6 (CAD6) from Arabidopsis thaliana (Mouse-ear cress).